We begin with the raw amino-acid sequence, 270 residues long: Acyl-[acyl-carrier-protein]--UDP-N-acetylglucosamine O-acyltransferase (270 aa).

This sequence belongs to the transferase hexapeptide repeat family. LpxA subfamily. Homotrimer.

The protein localises to the cytoplasm. It catalyses the reaction a (3R)-hydroxyacyl-[ACP] + UDP-N-acetyl-alpha-D-glucosamine = a UDP-3-O-[(3R)-3-hydroxyacyl]-N-acetyl-alpha-D-glucosamine + holo-[ACP]. It participates in glycolipid biosynthesis; lipid IV(A) biosynthesis; lipid IV(A) from (3R)-3-hydroxytetradecanoyl-[acyl-carrier-protein] and UDP-N-acetyl-alpha-D-glucosamine: step 1/6. Functionally, involved in the biosynthesis of lipid A, a phosphorylated glycolipid that anchors the lipopolysaccharide to the outer membrane of the cell. This is Acyl-[acyl-carrier-protein]--UDP-N-acetylglucosamine O-acyltransferase from Sinorhizobium fredii (strain NBRC 101917 / NGR234).